The chain runs to 426 residues: Serine--tRNA ligase (426 aa).

230–232 (TAE) serves as a coordination point for L-serine. 261–263 (RSE) contributes to the ATP binding site. Position 284 (Glu-284) interacts with L-serine. 348–351 (EISS) is a binding site for ATP. Ser-384 serves as a coordination point for L-serine.

It belongs to the class-II aminoacyl-tRNA synthetase family. Type-1 seryl-tRNA synthetase subfamily. In terms of assembly, homodimer. The tRNA molecule binds across the dimer.

The protein resides in the cytoplasm. It carries out the reaction tRNA(Ser) + L-serine + ATP = L-seryl-tRNA(Ser) + AMP + diphosphate + H(+). It catalyses the reaction tRNA(Sec) + L-serine + ATP = L-seryl-tRNA(Sec) + AMP + diphosphate + H(+). It functions in the pathway aminoacyl-tRNA biosynthesis; selenocysteinyl-tRNA(Sec) biosynthesis; L-seryl-tRNA(Sec) from L-serine and tRNA(Sec): step 1/1. Functionally, catalyzes the attachment of serine to tRNA(Ser). Is also able to aminoacylate tRNA(Sec) with serine, to form the misacylated tRNA L-seryl-tRNA(Sec), which will be further converted into selenocysteinyl-tRNA(Sec). The chain is Serine--tRNA ligase from Novosphingobium aromaticivorans (strain ATCC 700278 / DSM 12444 / CCUG 56034 / CIP 105152 / NBRC 16084 / F199).